A 440-amino-acid polypeptide reads, in one-letter code: 3-phosphoshikimate 1-carboxyvinyltransferase (440 aa).

Residues lysine 25, serine 26, and arginine 30 each contribute to the 3-phosphoshikimate site. Lysine 25 lines the phosphoenolpyruvate pocket. Residues glycine 96 and arginine 124 each contribute to the phosphoenolpyruvate site. The 3-phosphoshikimate site is built by serine 168, glutamine 169, aspartate 310, and lysine 337. Phosphoenolpyruvate is bound at residue glutamine 169. Catalysis depends on aspartate 310, which acts as the Proton acceptor. The phosphoenolpyruvate site is built by arginine 341, arginine 382, and lysine 409.

This sequence belongs to the EPSP synthase family. Monomer.

Its subcellular location is the cytoplasm. It carries out the reaction 3-phosphoshikimate + phosphoenolpyruvate = 5-O-(1-carboxyvinyl)-3-phosphoshikimate + phosphate. It participates in metabolic intermediate biosynthesis; chorismate biosynthesis; chorismate from D-erythrose 4-phosphate and phosphoenolpyruvate: step 6/7. Functionally, catalyzes the transfer of the enolpyruvyl moiety of phosphoenolpyruvate (PEP) to the 5-hydroxyl of shikimate-3-phosphate (S3P) to produce enolpyruvyl shikimate-3-phosphate and inorganic phosphate. The polypeptide is 3-phosphoshikimate 1-carboxyvinyltransferase (Chlamydia trachomatis serovar L2 (strain ATCC VR-902B / DSM 19102 / 434/Bu)).